An 85-amino-acid polypeptide reads, in one-letter code: uncharacterized protein (85 aa).

2 helical membrane passes run 12–34 (ICLS…VLAF) and 49–71 (IPEF…NGFV).

The protein resides in the cell membrane. This is an uncharacterized protein from Archaeoglobus fulgidus (strain ATCC 49558 / DSM 4304 / JCM 9628 / NBRC 100126 / VC-16).